We begin with the raw amino-acid sequence, 87 residues long: MAHKKGTGSTRNGRDSNAQRLGVKRYGGQTVTAGSIIVRQRGTQVHPGNNVGRGKDDTLFALIDGVVKFEHKTRSRRKVSVYPATAE.

The interval 1–23 is disordered; sequence MAHKKGTGSTRNGRDSNAQRLGV. The segment covering 7 to 19 has biased composition (polar residues); that stretch reads TGSTRNGRDSNAQ.

This sequence belongs to the bacterial ribosomal protein bL27 family.

The sequence is that of Large ribosomal subunit protein bL27 (rpmA) from Synechocystis sp. (strain ATCC 27184 / PCC 6803 / Kazusa).